The chain runs to 257 residues: MTQAQKLSAQEIIQFIGNAEKKTQVKVTLSGMPSFKSAGFLAENGRPNFKALANKGIQVLGDFHTHYSLKIIIGDWQAVRPLLEGLTENKDYTIEFEGRNSAVPLLDTRAINARIEPGAIIRDQVMIGDNAVIMMGAIINIGAEIGEGTMIDMGAVLGGRATVGKNSHIGAGAVLAGVIEPASAEPVRVGDNVLVGANAVVIEGVQVGSGSVVAAGAIVTQDVPENVVVAGVPARTIKEIDEKTAQKTALEDALRNL.

It belongs to the transferase hexapeptide repeat family. DapH subfamily.

The enzyme catalyses (S)-2,3,4,5-tetrahydrodipicolinate + acetyl-CoA + H2O = L-2-acetamido-6-oxoheptanedioate + CoA. It functions in the pathway amino-acid biosynthesis; L-lysine biosynthesis via DAP pathway; LL-2,6-diaminopimelate from (S)-tetrahydrodipicolinate (acetylase route): step 1/3. Its function is as follows. Catalyzes the transfer of an acetyl group from acetyl-CoA to tetrahydrodipicolinate. In Lactococcus lactis subsp. cremoris (strain SK11), this protein is 2,3,4,5-tetrahydropyridine-2,6-dicarboxylate N-acetyltransferase.